The chain runs to 102 residues: Small ribosomal subunit protein uS14m (102 aa).

It belongs to the universal ribosomal protein uS14 family.

The protein resides in the mitochondrion. The chain is Small ribosomal subunit protein uS14m (RPS14) from Paramecium tetraurelia.